The primary structure comprises 935 residues: C-1-tetrahydrofolate synthase, cytoplasmic (935 aa).

Met-1 is subject to N-acetylmethionine. The tract at residues 2–291 (APAEILNGKE…MLMQSTVESA (290 aa)) is methylenetetrahydrofolate dehydrogenase and methenyltetrahydrofolate cyclohydrolase (D/C) domain. Residues 52–56 (YINVK) and 99–101 (VQL) each bind substrate. Lys-56 is a catalytic residue. NADP(+) contacts are provided by residues 172-174 (GRS) and Ser-197. Substrate is bound at residue 272–276 (PGGVG). Residues 310–935 (LNLKTPVPSD…PETEQVNGLF (626 aa)) form a formyltetrahydrofolate synthetase domain region. Ser-318 is modified (phosphoserine). 380–387 (TPLGEGKS) serves as a coordination point for ATP. 2 positions are modified to phosphoserine: Ser-413 and Ser-490.

The protein in the N-terminal section; belongs to the tetrahydrofolate dehydrogenase/cyclohydrolase family. This sequence in the C-terminal section; belongs to the formate--tetrahydrofolate ligase family. In terms of assembly, homodimer. Ubiquitous.

It is found in the cytoplasm. It catalyses the reaction (6R)-5,10-methylene-5,6,7,8-tetrahydrofolate + NADP(+) = (6R)-5,10-methenyltetrahydrofolate + NADPH. The enzyme catalyses (6R)-5,10-methenyltetrahydrofolate + H2O = (6R)-10-formyltetrahydrofolate + H(+). The catalysed reaction is (6S)-5,6,7,8-tetrahydrofolate + formate + ATP = (6R)-10-formyltetrahydrofolate + ADP + phosphate. Its pathway is one-carbon metabolism; tetrahydrofolate interconversion. Functionally, trifunctional enzyme that catalyzes the interconversion of three forms of one-carbon-substituted tetrahydrofolate: (6R)-5,10-methylene-5,6,7,8-tetrahydrofolate, 5,10-methenyltetrahydrofolate and (6S)-10-formyltetrahydrofolate. These derivatives of tetrahydrofolate are differentially required in nucleotide and amino acid biosynthesis, (6S)-10-formyltetrahydrofolate being required for purine biosynthesis while (6R)-5,10-methylene-5,6,7,8-tetrahydrofolate is used for serine and methionine biosynthesis for instance. This is C-1-tetrahydrofolate synthase, cytoplasmic (MTHFD1) from Homo sapiens (Human).